We begin with the raw amino-acid sequence, 87 residues long: U3-theraphotoxin-Hhn1b (87 aa).

The signal sequence occupies residues 1–24 (MVNMKASMFLTFAGLVLLFVVCYA). The propeptide occupies 25 to 52 (SESEEKEFPREMLSSIFAVDNDFKQEER). Cystine bridges form between cysteine 54–cysteine 67 and cysteine 61–cysteine 72.

This sequence belongs to the neurotoxin 10 (Hwtx-1) family. 51 (Hntx-8) subfamily. Hntx-8 sub-subfamily. In terms of tissue distribution, expressed by the venom gland.

It localises to the secreted. In terms of biological role, ion channel inhibitor. This chain is U3-theraphotoxin-Hhn1b, found in Cyriopagopus hainanus (Chinese bird spider).